The following is a 678-amino-acid chain: Exoribonuclease 2 (678 aa).

An RNB domain is found at 193–521 (REDLTALPFV…INHRLLKAHI (329 aa)). Positions 568–650 (ETRFQAEIFD…ENRSLVGKPT (83 aa)) constitute an S1 motif domain. The disordered stretch occupies residues 659 to 678 (ETQTSAEQPAEGAENNEPQV).

Belongs to the RNR ribonuclease family. RNase II subfamily.

The protein localises to the cytoplasm. The enzyme catalyses Exonucleolytic cleavage in the 3'- to 5'-direction to yield nucleoside 5'-phosphates.. Involved in mRNA degradation. Hydrolyzes single-stranded polyribonucleotides processively in the 3' to 5' direction. In Vibrio cholerae serotype O1 (strain ATCC 39315 / El Tor Inaba N16961), this protein is Exoribonuclease 2.